The following is a 132-amino-acid chain: AVLVTGCDSGFGFSLAKHLHSKGFLVFAGCLLKEVAEVNLWGTVRSFLPLLRRVVNISSMLGRSPYCITKFGVEAFSDCLRYEMHPLGVKVSVVEPGNFIAATSLYSPERMWDELPEVVRKYHPMDYYWWLR.

Residue 3 to 27 (LVTGCDSGFGFSLAKHLHSKGFLVF) participates in NAD(+) binding. Lys17 bears the N6-acetyllysine mark. Ser59 provides a ligand contact to substrate. Catalysis depends on Tyr66, which acts as the Proton acceptor. Position 70 is an N6-acetyllysine (Lys70). O-linked (GlcNAc) serine glycosylation occurs at Ser77. Ser104 carries the post-translational modification Phosphoserine.

The protein belongs to the short-chain dehydrogenases/reductases (SDR) family. In terms of assembly, homotetramer.

The protein localises to the mitochondrion inner membrane. The protein resides in the mitochondrion matrix. The catalysed reaction is (R)-3-hydroxybutanoate + NAD(+) = acetoacetate + NADH + H(+). Requires phosphatidylcholine as an allosteric activator for enzymatic activity. This Mesocricetus auratus (Golden hamster) protein is D-beta-hydroxybutyrate dehydrogenase, mitochondrial.